A 192-amino-acid chain; its full sequence is dTTP/UTP pyrophosphatase (192 aa).

Residue Asp-70 is the Proton acceptor of the active site.

The protein belongs to the Maf family. YhdE subfamily. The cofactor is a divalent metal cation.

The protein resides in the cytoplasm. It catalyses the reaction dTTP + H2O = dTMP + diphosphate + H(+). It carries out the reaction UTP + H2O = UMP + diphosphate + H(+). In terms of biological role, nucleoside triphosphate pyrophosphatase that hydrolyzes dTTP and UTP. May have a dual role in cell division arrest and in preventing the incorporation of modified nucleotides into cellular nucleic acids. The sequence is that of dTTP/UTP pyrophosphatase from Alkaliphilus metalliredigens (strain QYMF).